The chain runs to 422 residues: MLDARYIRENLETVEARLKTRGEGVDIALFKELDGRRRELLQQSETLKALRNKVTEEIARLQDKSQAAERKTEMREVSQQIKGIDESLRSVEEELQNFLLTVPNVPNETTPIGKSEEDNVVVRTWGEVPTLSFEPKPHWEIGEGLGILDFERGAKLAGARFTLYRGAGARLERALINYMLDLHTDEHKYIEMLPPFMVNRECMTGTGQLPKFEEDLFHMEGVDFFLIPTAEVPVTNIHRGEILKGSDLPISYVAYTPCFRKEAGSYGKDTRGLIRQHQFNKVELVKFTSPEDSYQQLQKLLGHAEEVLRRLQIPYRVVELCTGDIGFSAAKTFDIEVWLPGQNCYREISSCSCFEDFQARRAGIRFRPEEKAKPEFVHTLNGSGLAVGRTLVAVLENYQQADGSVLIPEVLRPYMGGAERIS.

An L-serine-binding site is contributed by Thr229 to Glu231. Arg260–Glu262 serves as a coordination point for ATP. An L-serine-binding site is contributed by Glu283. Residue Glu347 to Ser350 coordinates ATP. Ser383 contacts L-serine.

Belongs to the class-II aminoacyl-tRNA synthetase family. Type-1 seryl-tRNA synthetase subfamily. As to quaternary structure, homodimer. The tRNA molecule binds across the dimer.

It is found in the cytoplasm. The catalysed reaction is tRNA(Ser) + L-serine + ATP = L-seryl-tRNA(Ser) + AMP + diphosphate + H(+). The enzyme catalyses tRNA(Sec) + L-serine + ATP = L-seryl-tRNA(Sec) + AMP + diphosphate + H(+). The protein operates within aminoacyl-tRNA biosynthesis; selenocysteinyl-tRNA(Sec) biosynthesis; L-seryl-tRNA(Sec) from L-serine and tRNA(Sec): step 1/1. Functionally, catalyzes the attachment of serine to tRNA(Ser). Is also able to aminoacylate tRNA(Sec) with serine, to form the misacylated tRNA L-seryl-tRNA(Sec), which will be further converted into selenocysteinyl-tRNA(Sec). In Citrifermentans bemidjiense (strain ATCC BAA-1014 / DSM 16622 / JCM 12645 / Bem) (Geobacter bemidjiensis), this protein is Serine--tRNA ligase.